We begin with the raw amino-acid sequence, 330 residues long: MVRFVPWNVPLYRRLETMAVAIYAMVLPVCLIMAFNLIVIPLFWGIAIPYLVWMFYFDTKHESGGRRVSLVRNSILWRYFRDYFPISLIINSNYDPKKNYIFAYHPHGIISIGAFCNFATNANNIDEKLPGLKVHLLTLESNFKIPFLRDVLMSFGMSSVSKKSCENILNSGAGESICLVVGGAEESLDARPGLNEITLKKRKGFIKLALVNGASLVPVYSFGENDIYDQVPNPRGSLVRKIQTKIKDLTGIAPPLFMGRGIFNYDFGLLPVRHKIVTVVGEPIDIPKIKSPTDQVIEHYHQIYVEALQNLFDKHKNSCADKETGNLKIN.

The next 2 helical transmembrane spans lie at 15–35 and 37–57; these read LETM…IMAF and LIVI…MFYF.

It belongs to the diacylglycerol acyltransferase family.

It is found in the endoplasmic reticulum membrane. It carries out the reaction an acyl-CoA + a 1,2-diacyl-sn-glycerol = a triacyl-sn-glycerol + CoA. It catalyses the reaction all-trans-retinol + an acyl-CoA = an all-trans-retinyl ester + CoA. The catalysed reaction is 2-(9Z-octadecenoyl)-glycerol + (9Z)-octadecenoyl-CoA = 1,2-di-(9Z-octadecenoyl)-sn-glycerol + CoA. The enzyme catalyses 1,2-di-(9Z-octadecenoyl)-sn-glycerol + (9Z)-octadecenoyl-CoA = 1,2,3-tri-(9Z-octadecenoyl)-glycerol + CoA. It carries out the reaction all-trans-retinol + hexadecanoyl-CoA = all-trans-retinyl hexadecanoate + CoA. It catalyses the reaction 1-O-(9Z-octadecenyl)-glycerol + (9Z)-octadecenoyl-CoA = 1-O-(9Z-octadecyl)-3-(9Z-octadecenoyl)-glycerol + CoA. The catalysed reaction is 1-(9Z-octadecenoyl)-glycerol + (9Z)-octadecenoyl-CoA = 1,2-di-(9Z-octadecenoyl)-glycerol + CoA. The enzyme catalyses 1,2-di-(9Z-octadecenoyl)-sn-glycerol + hexadecanoyl-CoA = 1,2-di-(9Z)-octadecenoyl-3-hexadecanoyl-sn-glycerol + CoA. It carries out the reaction 1,3-di-(9Z-octadecenoyl)-glycerol + (9Z)-octadecenoyl-CoA = 1,2,3-tri-(9Z-octadecenoyl)-glycerol + CoA. It catalyses the reaction 2,3-di-(9Z)-octadecenoyl-sn-glycerol + (9Z)-octadecenoyl-CoA = 1,2,3-tri-(9Z-octadecenoyl)-glycerol + CoA. The catalysed reaction is 2-(9Z-octadecenoyl)-glycerol + hexadecanoyl-CoA = 1-hexadecanoyl-2-(9Z-octadecenoyl)-sn-glycerol + CoA. It participates in glycerolipid metabolism; triacylglycerol biosynthesis. Functionally, catalyzes the terminal and only committed step in triacylglycerol synthesis by using diacylglycerol and fatty acyl CoA as substrates. Required for storage lipid synthesis. This chain is Diacylglycerol O-acyltransferase 2 (dgat2), found in Dictyostelium discoideum (Social amoeba).